Here is a 413-residue protein sequence, read N- to C-terminus: MAP kinase-interacting serine/threonine-protein kinase 1 (413 aa).

The interval 1–26 (MGSSEPLPIVDSDKRRKKKRKTRATD) is disordered. Threonine 22 carries the post-translational modification Phosphothreonine; by PAK2. Residue serine 27 is modified to Phosphoserine; by PAK2. A Protein kinase domain is found at 37–321 (QLTSELLGEG…AAQVLQHPWV (285 aa)). Residues 43-51 (LGEGAYAKV) and lysine 66 each bind ATP. The active-site Proton acceptor is the aspartate 158. A phosphoserine mark is found at serine 168 and serine 173. Phosphothreonine is present on residues threonine 197, threonine 202, and threonine 332.

The protein belongs to the protein kinase superfamily. CAMK Ser/Thr protein kinase family. In terms of assembly, interacts with the C-terminal regions of EIF4G1 and EIF4G2. Also binds to dephosphorylated ERK1 and ERK2, and to the p38 kinases. It depends on Mg(2+) as a cofactor. Dual phosphorylation of Thr-197 and Thr-202 activates the kinase. Phosphorylation of Thr-332 activates the kinase. MAPK3/ERK1 is one of the kinases which activate MKNK1/MNK1. Phosphorylation by PAK2 leads to a reduced phosphorylation of EIF4G1.

It catalyses the reaction L-seryl-[protein] + ATP = O-phospho-L-seryl-[protein] + ADP + H(+). The enzyme catalyses L-threonyl-[protein] + ATP = O-phospho-L-threonyl-[protein] + ADP + H(+). Its activity is regulated as follows. Phosphorylated and activated by the p38 kinases and kinases in the Erk pathway. May play a role in the response to environmental stress and cytokines. Appears to regulate translation by phosphorylating EIF4E, thus increasing the affinity of this protein for the 7-methylguanosine-containing mRNA cap. The polypeptide is MAP kinase-interacting serine/threonine-protein kinase 1 (Mknk1) (Rattus norvegicus (Rat)).